Here is an 865-residue protein sequence, read N- to C-terminus: DNA topoisomerase 1 (865 aa).

Positions 3-142 (KALVIVESPA…RYSRVVFNEI (140 aa)) constitute a Toprim domain. Glu9 contributes to the Mg(2+) binding site. Residues 37 to 65 (LPTSGSAAKKSADSTSTKTAKKPKKDERG) form a disordered region. Residues 39–54 (TSGSAAKKSADSTSTK) show a composition bias toward low complexity. Residue Asp111 coordinates Mg(2+). In terms of domain architecture, Topo IA-type catalytic spans 158 to 575 (NINRVNAQQA…NFFSDFTQQL (418 aa)). Residues 192-197 (SAGRVQ) form an interaction with DNA region. Catalysis depends on Tyr319, which acts as the O-(5'-phospho-DNA)-tyrosine intermediate. 3 C4-type zinc fingers span residues 599–630 (CPTCGRKMGIRTASTGVFLGCSGYALSPKERC), 662–689 (CQKCGTAMDSYLIDPKRKLHVCGNNPTC), and 711–736 (CEKCGSEMHLKMGRFGKYMACTNDEC).

Belongs to the type IA topoisomerase family. Monomer. Mg(2+) serves as cofactor.

The enzyme catalyses ATP-independent breakage of single-stranded DNA, followed by passage and rejoining.. Its function is as follows. Releases the supercoiling and torsional tension of DNA, which is introduced during the DNA replication and transcription, by transiently cleaving and rejoining one strand of the DNA duplex. Introduces a single-strand break via transesterification at a target site in duplex DNA. The scissile phosphodiester is attacked by the catalytic tyrosine of the enzyme, resulting in the formation of a DNA-(5'-phosphotyrosyl)-enzyme intermediate and the expulsion of a 3'-OH DNA strand. The free DNA strand then undergoes passage around the unbroken strand, thus removing DNA supercoils. Finally, in the religation step, the DNA 3'-OH attacks the covalent intermediate to expel the active-site tyrosine and restore the DNA phosphodiester backbone. The polypeptide is DNA topoisomerase 1 (Salmonella typhimurium (strain LT2 / SGSC1412 / ATCC 700720)).